The chain runs to 83 residues: Toxin To15 (83 aa).

A signal peptide spans 1 to 19 (MKGIILLISCLMLIEVVVG). In terms of domain architecture, LCN-type CS-alpha/beta spans 21-82 (KEGYPLDSSG…IWNAKTNKCY (62 aa)). Cystine bridges form between cysteine 31-cysteine 81, cysteine 35-cysteine 57, cysteine 43-cysteine 62, and cysteine 47-cysteine 64.

The protein belongs to the long (4 C-C) scorpion toxin superfamily. Sodium channel inhibitor family. Beta subfamily. As to expression, expressed by the venom gland.

Its subcellular location is the secreted. Functionally, beta toxins bind voltage-independently at site-4 of sodium channels (Nav) and shift the voltage of activation toward more negative potentials thereby affecting sodium channel activation and promoting spontaneous and repetitive firing. In Tityus obscurus (Amazonian scorpion), this protein is Toxin To15.